The primary structure comprises 73 residues: Conotoxin Cl14.8 (73 aa).

An N-terminal signal peptide occupies residues 1–19 (MKLSVTFIALMLTMTLTQG). Positions 20–47 (FVLQAIDGRDNSGLDDLSEADSMEHQLQ) are excised as a propeptide.

The protein belongs to the conotoxin L superfamily. Post-translationally, contains 2 disulfide bonds. As to expression, expressed by the venom duct.

It is found in the secreted. The chain is Conotoxin Cl14.8 from Californiconus californicus (California cone).